Reading from the N-terminus, the 118-residue chain is Eukaryotic translation initiation factor 4E-binding protein 1 (118 aa).

2 stretches are compositionally biased toward polar residues: residues 1-12 (MSGGSSCSQTPS) and 34-48 (YSTTPGGTLFSTTPG). Disordered stretches follow at residues 1–20 (MSGGSSCSQTPSRAIPATRR) and 25–48 (DGVQLPPGDYSTTPGGTLFSTTPG). Residue Ser2 is modified to N-acetylserine. At Thr37 the chain carries Phosphothreonine; by MTOR. Thr41 is subject to Phosphothreonine. Ser44 is subject to Phosphoserine. The residue at position 46 (Thr46) is a Phosphothreonine; by MTOR. Residue Thr50 is modified to Phosphothreonine. Tyr54 carries the post-translational modification Phosphotyrosine. The YXXXXLphi motif signature appears at 54–60 (YDRKFLM). Lys57 participates in a covalent cross-link: Glycyl lysine isopeptide (Lys-Gly) (interchain with G-Cter in ubiquitin). A disordered region spans residues 64 to 118 (NSPVTKTPPRDLPTIPGVTSPSSDEPPMEASQSHLRNSPEDKRAGGEESQFEMDI). Ser65 carries the phosphoserine; by DYRK2, MAPK1, MAPK3 and MTOR modification. Residue Thr70 is modified to Phosphothreonine; by MTOR. Thr77 is modified (phosphothreonine). A phosphoserine mark is found at Ser83 and Ser96. Residues 100-109 (NSPEDKRAGG) show a composition bias toward basic and acidic residues. Ser101 is subject to Phosphoserine; by DYRK2. Ser112 carries the post-translational modification Phosphoserine. The TOS motif motif lies at 114-118 (FEMDI).

Belongs to the eIF4E-binding protein family. In terms of assembly, hypophosphorylated EIF4EBP1 competes with EIF4G1/EIF4G3 to interact with EIF4E; insulin stimulated MAP-kinase (MAPK1 and MAPK3) or mTORC1 phosphorylation of EIF4EBP1 causes dissociation of the complex allowing EIF4G1/EIF4G3 to bind and consequent initiation of translation. Interacts (via TOS motif) with RPTOR; promoting phosphorylation by mTORC1. Post-translationally, phosphorylated on serine and threonine residues in response to insulin, EGF and PDGF. Phosphorylation at Thr-37, Thr-46, Ser-65 and Thr-70, corresponding to the hyperphosphorylated form, is regulated by mTORC1 and abolishes binding to EIF4E. In terms of processing, ubiquitinated: when eIF4E levels are low, hypophosphorylated form is ubiquitinated by the BCR(KLHL25) complex, leading to its degradation and serving as a homeostatic mechanism to maintain translation and prevent eIF4E inhibition when eIF4E levels are low. Not ubiquitinated when hyperphosphorylated (at Thr-37, Thr-46, Ser-65 and Thr-70) or associated with eIF4E.

Its subcellular location is the cytoplasm. It is found in the nucleus. In terms of biological role, repressor of translation initiation that regulates EIF4E activity by preventing its assembly into the eIF4F complex: hypophosphorylated form competes with EIF4G1/EIF4G3 and strongly binds to EIF4E, leading to repress translation. In contrast, hyperphosphorylated form dissociates from EIF4E, allowing interaction between EIF4G1/EIF4G3 and EIF4E, leading to initiation of translation. Mediates the regulation of protein translation by hormones, growth factors and other stimuli that signal through the MAP kinase and mTORC1 pathways. This Homo sapiens (Human) protein is Eukaryotic translation initiation factor 4E-binding protein 1 (EIF4EBP1).